Reading from the N-terminus, the 217-residue chain is Lectin ADEL (217 aa).

5 disulfide bridges follow: C5-C187, C42-C68, C61-C77, C114-C135, and C142-C206. N-linked (GlcNAc...) asparagine glycosylation occurs at N30. N102 and N126 each carry an N-linked (GlcNAc...) asparagine glycan.

As to quaternary structure, homodimer; disulfide-linked. Contains disulfide bonds.

In terms of biological role, binds in decreasing order of affinity: galacturonic acid, D-galactosamine, methyl-alpha-D-galactopyranoside and further galactose-containing carbohydrates. Has hemagglutinating activity against human and rabbit erythrocytes. This Aplysia dactylomela (Spotted sea hare) protein is Lectin ADEL.